The chain runs to 363 residues: NAD(P)H-quinone oxidoreductase subunit 1, chloroplastic (363 aa).

The next 7 helical transmembrane spans lie at 30–50 (LVPI…IVWL), 98–118 (FSIG…VIPF), 129–149 (VGVF…LMSG), 165–185 (AAQS…ISLL), 253–273 (FAFF…FVTI), 303–323 (TTTE…ISIT), and 336–356 (LLNL…LLTT).

It belongs to the complex I subunit 1 family. In terms of assembly, NDH is composed of at least 16 different subunits, 5 of which are encoded in the nucleus.

It is found in the plastid. Its subcellular location is the chloroplast thylakoid membrane. It catalyses the reaction a plastoquinone + NADH + (n+1) H(+)(in) = a plastoquinol + NAD(+) + n H(+)(out). The catalysed reaction is a plastoquinone + NADPH + (n+1) H(+)(in) = a plastoquinol + NADP(+) + n H(+)(out). Functionally, NDH shuttles electrons from NAD(P)H:plastoquinone, via FMN and iron-sulfur (Fe-S) centers, to quinones in the photosynthetic chain and possibly in a chloroplast respiratory chain. The immediate electron acceptor for the enzyme in this species is believed to be plastoquinone. Couples the redox reaction to proton translocation, and thus conserves the redox energy in a proton gradient. The protein is NAD(P)H-quinone oxidoreductase subunit 1, chloroplastic of Pelargonium hortorum (Common geranium).